A 346-amino-acid chain; its full sequence is Very-long-chain 3-oxoacyl-CoA reductase (346 aa).

Residues 26–46 traverse the membrane as a helical segment; the sequence is GASALLAAGSLFVVSRALVFV. Residues Val-71, Asp-126, Asp-134, Asn-153, Tyr-220, Lys-224, Ile-253, and Ser-255 each coordinate NADP(+). Tyr-220 (proton donor) is an active-site residue. Lys-224 acts as the Lowers pKa of active site Tyr in catalysis.

Belongs to the short-chain dehydrogenases/reductases (SDR) family.

The protein localises to the endoplasmic reticulum membrane. The enzyme catalyses a very-long-chain (3R)-3-hydroxyacyl-CoA + NADP(+) = a very-long-chain 3-oxoacyl-CoA + NADPH + H(+). It functions in the pathway lipid metabolism; fatty acid biosynthesis. Component of the microsomal membrane bound fatty acid elongation system, which produces the 26-carbon very long-chain fatty acids (VLCFA) from palmitate. Catalyzes the reduction of the 3-ketoacyl-CoA intermediate that is formed in each cycle of fatty acid elongation. VLCFAs serve as precursors for ceramide and sphingolipids. The sequence is that of Very-long-chain 3-oxoacyl-CoA reductase from Aspergillus niger (strain ATCC MYA-4892 / CBS 513.88 / FGSC A1513).